We begin with the raw amino-acid sequence, 129 residues long: MANLNQIQKEVSEILSDQKSMKSDIKAILEMLGSQNPIKESLEAVAAKIVNDLTKLINDCPCNKEILEALGNQPKEQLIEQPKEKGKGLNLGKYSYPNYGVGNEELGSSGNPKALTWPFKAPAGWPNQF.

Coiled coils occupy residues Met-1 to Met-31 and Ile-38 to Asp-59. The capsid binding stretch occupies residues Pro-122–Phe-129.

The protein belongs to the caulimovirus ORF III family. In terms of assembly, homotetramer, through coiled-coil domain. Homotrimer when interacts with icosehadral capsid. Interacts with capsid protein, and with Movement protein.

Its subcellular location is the virion. It is found in the host cell junction. The protein resides in the host plasmodesma. Functionally, plays a role in virus cell-to-cell and plant-to-plant transmission. Interacts with virion icosahedral capsid and movement protein, thereby facilitating virion cell-to-cell transmission through plasmodesmata opened by viral movement protein. Also interacts with aphid transmission factor, attaching the virion to aphid stylet when the animal feeds on an virus infected plant. Aphid saliva may later detach the virion, inducing release of infectious particles when the animal feeds on a new plant. This chain is Virion-associated protein, found in Arabidopsis thaliana (Mouse-ear cress).